An 852-amino-acid polypeptide reads, in one-letter code: DNA double-strand break repair Rad50 ATPase (852 aa).

Residues Asn32, Gly33, Ala34, Gly35, Lys36, Ser37, Ser38, Arg53, Tyr54, Asp59, Val61, and Arg63 each coordinate ATP. Ser37 lines the Mg(2+) pocket. Gln142 serves as a coordination point for Mg(2+). Coiled coils occupy residues 155–345 (EITE…EELD) and 389–427 (LLSI…QIAS). One can recognise a Zinc-hook domain in the interval 389 to 488 (LLSIEKTENE…SLSSLIEDLL (100 aa)). Positions 435 and 438 each coordinate Zn(2+). Coiled-coil stretches lie at residues 460–488 (DQKR…EDLL) and 534–711 (KIEE…LFDK). Position 797 (Asp797) interacts with Mg(2+).

It belongs to the SMC family. RAD50 subfamily. Homodimer. Forms a complex with Mre11. The cofactor is Zn(2+).

The enzyme catalyses ATP + H2O = ADP + phosphate + H(+). Functionally, involved in DNA double-strand break repair (DSBR). The Rad50/Mre11 complex possesses single-strand endonuclease activity and ATP-dependent double-strand-specific 3'-5' exonuclease activity. Rad50 provides an ATP-dependent control of Mre11 by positioning DNA ends into the Mre11 active site: ATP-binding induces a large structural change from an open form with accessible Mre11 nuclease sites into a closed form. In Thermotoga maritima (strain ATCC 43589 / DSM 3109 / JCM 10099 / NBRC 100826 / MSB8), this protein is DNA double-strand break repair Rad50 ATPase.